A 62-amino-acid polypeptide reads, in one-letter code: Temporin-CDYb (62 aa).

Positions 1 to 22 (MFTLKKSLLLLFFLGTINLSLC) are cleaved as a signal peptide. The propeptide occupies 23–45 (EEERDADEEERRDDPEERAVQVE). At L60 the chain carries Leucine amide.

Belongs to the frog skin active peptide (FSAP) family. Temporin subfamily. In terms of tissue distribution, expressed by the skin glands.

It localises to the secreted. Functionally, antimicrobial peptide. Has low activity against the Gram-positive bacterium S.aureus (MIC&gt;100 uM) and the Gram-negative bacterium E.coli (MIC&gt;100 uM). Has weak hemolytic activity against human erythrocytes. In Rana dybowskii (Dybovsky's frog), this protein is Temporin-CDYb.